We begin with the raw amino-acid sequence, 1517 residues long: DNA-directed RNA polymerase subunit beta' (1517 aa).

Zn(2+) is bound by residues C71, C73, C86, and C89. Mg(2+)-binding residues include D482, D484, and D486. Zn(2+)-binding residues include C812, C886, C893, and C896.

This sequence belongs to the RNA polymerase beta' chain family. The RNAP catalytic core consists of 2 alpha, 1 beta, 1 beta' and 1 omega subunit. When a sigma factor is associated with the core the holoenzyme is formed, which can initiate transcription. It depends on Mg(2+) as a cofactor. Zn(2+) is required as a cofactor.

It catalyses the reaction RNA(n) + a ribonucleoside 5'-triphosphate = RNA(n+1) + diphosphate. In terms of biological role, DNA-dependent RNA polymerase catalyzes the transcription of DNA into RNA using the four ribonucleoside triphosphates as substrates. The polypeptide is DNA-directed RNA polymerase subunit beta' (Campylobacter lari (strain RM2100 / D67 / ATCC BAA-1060)).